Consider the following 345-residue polypeptide: Olfactory receptor 11G2 (345 aa).

Residues 1 to 62 lie on the Extracellular side of the membrane; that stretch reads MHFLSQNDLN…LGFPCPREGQ (62 aa). N-linked (GlcNAc...) asparagine glycosylation occurs at N43. Residues 63-83 traverse the membrane as a helical segment; the sequence is ILLFVLFTVVYLLTLMGNGSI. At 84 to 92 the chain is on the cytoplasmic side; that stretch reads ICAVHWDQR. A helical membrane pass occupies residues 93–113; sequence LHAPMYILLANFSFLEICYVT. At 114 to 135 the chain is on the extracellular side; the sequence is STVPSMLANFLSDTKIISFSGC. C135 and C217 are disulfide-bonded. The chain crosses the membrane as a helical span at residues 136-156; sequence FLQFYFFFSLGSTECFFLAVM. Residues 157 to 181 are Cytoplasmic-facing; sequence AFDRYLAICRPLRYPTIMTRRLCTN. Residues 182–202 form a helical membrane-spanning segment; it reads LVVNCWVLGFIWFLIPIVNIS. The Extracellular segment spans residues 203–241; sequence QMSFCGSRIIDHFLCDPAPLLTLTCKKGPVIELVFSVLS. A helical membrane pass occupies residues 242–264; that stretch reads PLPVFMLFLFIVGSYALVVRAVL. Over 265 to 275 the chain is Cytoplasmic; sequence RVPSAAGRRKA. The helical transmembrane segment at 276–296 threads the bilayer; sequence FSTCGSHLAVVSLFYGSVLVM. Residues 297–309 are Extracellular-facing; sequence YGSPPSKNEAGKQ. Residues 310–330 traverse the membrane as a helical segment; the sequence is KTVTLFYSVVTPLLNPVIYSL. Over 331–345 the chain is Cytoplasmic; the sequence is RNKDMRKALKKFWGT.

Belongs to the G-protein coupled receptor 1 family.

Its subcellular location is the cell membrane. In terms of biological role, odorant receptor. The chain is Olfactory receptor 11G2 (OR11G2) from Homo sapiens (Human).